The chain runs to 208 residues: Probable nicotinate-nucleotide adenylyltransferase (208 aa).

This sequence belongs to the NadD family.

The catalysed reaction is nicotinate beta-D-ribonucleotide + ATP + H(+) = deamido-NAD(+) + diphosphate. The protein operates within cofactor biosynthesis; NAD(+) biosynthesis; deamido-NAD(+) from nicotinate D-ribonucleotide: step 1/1. Functionally, catalyzes the reversible adenylation of nicotinate mononucleotide (NaMN) to nicotinic acid adenine dinucleotide (NaAD). The chain is Probable nicotinate-nucleotide adenylyltransferase from Kineococcus radiotolerans (strain ATCC BAA-149 / DSM 14245 / SRS30216).